The chain runs to 411 residues: Proline-responsive transcriptional activator PutR (411 aa).

The protein belongs to the CdaR family.

Its function is as follows. Activates transcription of the putBCP operon. Requires proline as a coactivator. The chain is Proline-responsive transcriptional activator PutR from Bacillus subtilis (strain 168).